We begin with the raw amino-acid sequence, 367 residues long: Alginate lyase (367 aa).

The signal sequence occupies residues 1-24 (MTLLKRISSPALLALALFGGAAHA). Substrate is bound by residues 63 to 64 (SK), 136 to 137 (HT), and Tyr254.

Belongs to the polysaccharide lyase 5 family.

The protein localises to the periplasm. It catalyses the reaction Eliminative cleavage of alginate to give oligosaccharides with 4-deoxy-alpha-L-erythro-hex-4-enuronosyl groups at their non-reducing ends and beta-D-mannuronate at their reducing end.. In terms of biological role, catalyzes the depolymerization of alginate by cleaving the beta-1,4 glycosidic bond between two adjacent sugar residues via a beta-elimination mechanism. May serve to degrade mislocalized alginate that is trapped in the periplasmic space. In Pseudomonas putida (strain GB-1), this protein is Alginate lyase.